Here is a 171-residue protein sequence, read N- to C-terminus: ATP synthase subunit b (171 aa).

Residues 32–52 (FFAVLLIFLIVLGVIAKWVVP) form a helical membrane-spanning segment.

It belongs to the ATPase B chain family. As to quaternary structure, F-type ATPases have 2 components, F(1) - the catalytic core - and F(0) - the membrane proton channel. F(1) has five subunits: alpha(3), beta(3), gamma(1), delta(1), epsilon(1). F(0) has three main subunits: a(1), b(2) and c(10-14). The alpha and beta chains form an alternating ring which encloses part of the gamma chain. F(1) is attached to F(0) by a central stalk formed by the gamma and epsilon chains, while a peripheral stalk is formed by the delta and b chains.

Its subcellular location is the cell membrane. F(1)F(0) ATP synthase produces ATP from ADP in the presence of a proton or sodium gradient. F-type ATPases consist of two structural domains, F(1) containing the extramembraneous catalytic core and F(0) containing the membrane proton channel, linked together by a central stalk and a peripheral stalk. During catalysis, ATP synthesis in the catalytic domain of F(1) is coupled via a rotary mechanism of the central stalk subunits to proton translocation. Its function is as follows. Component of the F(0) channel, it forms part of the peripheral stalk, linking F(1) to F(0). The polypeptide is ATP synthase subunit b (Mycolicibacterium gilvum (strain PYR-GCK) (Mycobacterium gilvum (strain PYR-GCK))).